We begin with the raw amino-acid sequence, 253 residues long: MGRKFFVGGNWKCNGTVSQVETIVNTLNAGQIASPDVVEVVVSPPYVFLPTVKDKLRPEIQVAAQNCWVKKGGAFTGEVSAEMLVNLGIPWVILGHSERRSLLAESSEFVGEKVAYALAQGLKVIACVGETLEQREAGSTMEVVAEQTKAIADKIKDWTNVVVAYEPVWAIGTGKVASPAQAQEVHANLRDWLKTNVSPEVAESTRIIYGGSVTGASCKELAAQPDVDGFLVGGASLKPEFIDIINAATVKSA.

Residues N10 and K12 each contribute to the substrate site. The Electrophile role is filled by H96. The Proton acceptor role is filled by E166.

It belongs to the triosephosphate isomerase family. In terms of assembly, homodimer.

It is found in the cytoplasm. It catalyses the reaction D-glyceraldehyde 3-phosphate = dihydroxyacetone phosphate. Its pathway is carbohydrate biosynthesis; gluconeogenesis. It participates in carbohydrate degradation; glycolysis; D-glyceraldehyde 3-phosphate from glycerone phosphate: step 1/1. In Secale cereale (Rye), this protein is Triosephosphate isomerase, cytosolic.